The following is a 299-amino-acid chain: Urease accessory protein UreD (299 aa).

The protein belongs to the UreD family. UreD, UreF and UreG form a complex that acts as a GTP-hydrolysis-dependent molecular chaperone, activating the urease apoprotein by helping to assemble the nickel containing metallocenter of UreC. The UreE protein probably delivers the nickel.

It localises to the cytoplasm. Required for maturation of urease via the functional incorporation of the urease nickel metallocenter. In Prochlorococcus marinus (strain MIT 9303), this protein is Urease accessory protein UreD.